The sequence spans 291 residues: 29 kDa ribonucleoprotein B, chloroplastic (291 aa).

The RRM 1 domain maps to 87-165 (LKLFVGNLPF…RAIRVNAGPA (79 aa)). The disordered stretch occupies residues 164–202 (PAPAKRENSSFGGGRGGNSSYGGGRDGNSSFGGARGGRS). A linker (Gly-rich) region spans residues 166 to 206 (PAKRENSSFGGGRGGNSSYGGGRDGNSSFGGARGGRSVDSS). Over residues 174-189 (FGGGRGGNSSYGGGRD) the composition is skewed to gly residues. Positions 207-285 (NRVYVGNLSW…RSIRVSAAEE (79 aa)) constitute an RRM 2 domain.

Its subcellular location is the plastid. It is found in the chloroplast. Its function is as follows. Could be involved in splicing and/or processing of chloroplast RNA's. This chain is 29 kDa ribonucleoprotein B, chloroplastic, found in Nicotiana sylvestris (Wood tobacco).